Here is a 148-residue protein sequence, read N- to C-terminus: Transcription antitermination protein NusB (148 aa).

Belongs to the NusB family.

Its function is as follows. Involved in transcription antitermination. Required for transcription of ribosomal RNA (rRNA) genes. Binds specifically to the boxA antiterminator sequence of the ribosomal RNA (rrn) operons. The protein is Transcription antitermination protein NusB of Novosphingobium aromaticivorans (strain ATCC 700278 / DSM 12444 / CCUG 56034 / CIP 105152 / NBRC 16084 / F199).